The chain runs to 61 residues: Protein SspF (61 aa).

This sequence belongs to the alpha/beta-type SASP family.

May play some important role in either sporulation or the dormant spore. This Bacillus subtilis (strain 168) protein is Protein SspF (sspF).